The primary structure comprises 330 residues: MAESAPLKIVFMGTPDFAAASLRHLLAWDGCDVVGVYTQPDRPCGRGQQCRPSAVKMLALEHGLDVRQPVNFRDEADVQALRDFGADILVVAAYGLILPQSVLDAAPMGAVNVHGSLLPRYRGAAPIQRAVMNGDAVTGITIMQVVKQLDAGPMLLQKALGIGCDETSGQLHDQLAELGGRLLVETLARLRAGTIMPIPQDDALATYAAKLTKADGLVDWNRTAVEVHAQVRGVTPWPAAYFTLRREGQKDVRVTIEPGTIGPLLEQPAVPGTIVGLVDGAIAFACADRTYLVRTIRPADKKPMTGEAFWCGYLSRCEGECPGFAVCEGA.

116–119 (SLLP) lines the (6S)-5,6,7,8-tetrahydrofolate pocket.

Belongs to the Fmt family.

The catalysed reaction is L-methionyl-tRNA(fMet) + (6R)-10-formyltetrahydrofolate = N-formyl-L-methionyl-tRNA(fMet) + (6S)-5,6,7,8-tetrahydrofolate + H(+). Functionally, attaches a formyl group to the free amino group of methionyl-tRNA(fMet). The formyl group appears to play a dual role in the initiator identity of N-formylmethionyl-tRNA by promoting its recognition by IF2 and preventing the misappropriation of this tRNA by the elongation apparatus. This chain is Methionyl-tRNA formyltransferase, found in Nitratidesulfovibrio vulgaris (strain DP4) (Desulfovibrio vulgaris).